The chain runs to 1387 residues: DNA-directed RNA polymerase subunit beta' (1387 aa).

4 residues coordinate Zn(2+): Cys-70, Cys-72, Cys-85, and Cys-88. Positions 461, 463, and 465 each coordinate Mg(2+). Zn(2+) contacts are provided by Cys-808, Cys-882, Cys-889, and Cys-892. Residues 1367 to 1387 (QDEAKGVGQETPRLSGQEAAE) are disordered.

Belongs to the RNA polymerase beta' chain family. The RNAP catalytic core consists of 2 alpha, 1 beta, 1 beta' and 1 omega subunit. When a sigma factor is associated with the core the holoenzyme is formed, which can initiate transcription. The cofactor is Mg(2+). Zn(2+) serves as cofactor.

The catalysed reaction is RNA(n) + a ribonucleoside 5'-triphosphate = RNA(n+1) + diphosphate. DNA-dependent RNA polymerase catalyzes the transcription of DNA into RNA using the four ribonucleoside triphosphates as substrates. In Granulibacter bethesdensis (strain ATCC BAA-1260 / CGDNIH1), this protein is DNA-directed RNA polymerase subunit beta'.